The chain runs to 327 residues: Zinc transport protein ZntB (327 aa).

At Met-1–Ser-271 the chain is on the cytoplasmic side. A helical transmembrane segment spans residues Leu-272 to Gly-292. Residues Gly-293–Pro-300 are Periplasmic-facing. The chain crosses the membrane as a helical span at residues Phe-301–Leu-321. The Cytoplasmic segment spans residues Lys-322 to Leu-327.

The protein belongs to the CorA metal ion transporter (MIT) (TC 1.A.35) family.

The protein localises to the cell inner membrane. The enzyme catalyses Zn(2+)(out) + H(+)(out) = Zn(2+)(in) + H(+)(in). Functionally, zinc transporter. Acts as a Zn(2+):proton symporter, which likely mediates zinc ion uptake. In Pectobacterium carotovorum subsp. carotovorum (strain PC1), this protein is Zinc transport protein ZntB.